The chain runs to 276 residues: Neuroendocrine protein 7B2 (276 aa).

Residues C155 and C168 are joined by a disulfide bond.

This sequence belongs to the 7B2 family. In terms of assembly, interacts with amon/PC2 early in the secretory pathway. Dissociation occurs at later stages.

It is found in the secreted. In terms of biological role, acts as a molecular chaperone for neuroendocrine convertase amon/PC2, preventing its premature activation in the regulated secretory pathway. Binds to inactive amon in the endoplasmic reticulum and facilitates its transport from there to later compartments of the secretory pathway where it is proteolytically matured and activated. Also required for cleavage of amon. The protein is Neuroendocrine protein 7B2 of Drosophila melanogaster (Fruit fly).